The sequence spans 266 residues: Large ribosomal subunit protein uL4 (266 aa).

It belongs to the universal ribosomal protein uL4 family. Part of the 50S ribosomal subunit.

One of the primary rRNA binding proteins, this protein initially binds near the 5'-end of the 23S rRNA. It is important during the early stages of 50S assembly. It makes multiple contacts with different domains of the 23S rRNA in the assembled 50S subunit and ribosome. Functionally, forms part of the polypeptide exit tunnel. The protein is Large ribosomal subunit protein uL4 of Sulfurisphaera tokodaii (strain DSM 16993 / JCM 10545 / NBRC 100140 / 7) (Sulfolobus tokodaii).